Consider the following 83-residue polypeptide: High-potential iron-sulfur protein (83 aa).

4 residues coordinate [4Fe-4S] cluster: cysteine 43, cysteine 46, cysteine 61, and cysteine 75.

The protein belongs to the high-potential iron-sulfur protein (HiPIP) family. As to quaternary structure, homodimer.

Functionally, specific class of high-redox-potential 4Fe-4S ferredoxins. Functions in anaerobic electron transport in most purple and in some other photosynthetic bacteria and in at least one genus (Paracoccus) of halophilic, denitrifying bacteria. This Thermochromatium tepidum (Chromatium tepidum) protein is High-potential iron-sulfur protein (hip).